We begin with the raw amino-acid sequence, 433 residues long: MVMMLFKKLSDVSEAEMQKLLSRGSGLEDVAKTVSTVLSDVRTKGDSALREYTAKFDKVELANFGVSEEEFQQALSGISPELLDHLKSAAANIRAFHEAQLPKATWFMELKPGIVLGQKATPLESVGAYAPGGRASYPSTVLMTVIPARVAGVEQVIVCTPPRPDGSVHPLTLAAAKVAGADKVFKLGGVQAIGSMAYGTETVPKVDKIVGPGNVFVTAAKMQIRDVAEIDFPAGPSEVLIIADESADAVMVASDILAQSEHDPNSVSILVTGSDTLAEAVKREVLVQAEQAARSSIIKSSLENAAILIADSLEQCIGFSNKFAPEHLEIMVADPDFVLDRIKNAGSIFIGNYSPVPVGDYASGTNHVLPTSGYARVYSGLNINHFIKYSSIQRISKSGLESLKETVIALAEEEGLQAHADAIRTRFGYKPSK.

The NAD(+) site is built by tyrosine 129, glutamine 191, and asparagine 214. Residues serine 237, glutamine 259, and histidine 262 each coordinate substrate. Zn(2+) contacts are provided by glutamine 259 and histidine 262. Residues glutamate 326 and histidine 327 each act as proton acceptor in the active site. Histidine 327, aspartate 360, glutamate 414, and histidine 419 together coordinate substrate. Aspartate 360 serves as a coordination point for Zn(2+). Position 419 (histidine 419) interacts with Zn(2+).

The protein belongs to the histidinol dehydrogenase family. It depends on Zn(2+) as a cofactor.

It carries out the reaction L-histidinol + 2 NAD(+) + H2O = L-histidine + 2 NADH + 3 H(+). It functions in the pathway amino-acid biosynthesis; L-histidine biosynthesis; L-histidine from 5-phospho-alpha-D-ribose 1-diphosphate: step 9/9. Functionally, catalyzes the sequential NAD-dependent oxidations of L-histidinol to L-histidinaldehyde and then to L-histidine. This chain is Histidinol dehydrogenase, found in Methanosarcina barkeri (strain Fusaro / DSM 804).